The following is a 464-amino-acid chain: Chromosomal replication initiator protein DnaA (464 aa).

Residues 1-82 (MSLSLWQQCL…LLRFEVGSKP (82 aa)) form a domain I, interacts with DnaA modulators region. The interval 82-127 (PITQVISQTVTASVSSAPAAPAARTAAPSRPSWDNAAAQPELSYRS) is domain II. Over residues 98–113 (APAAPAARTAAPSRPS) the composition is skewed to low complexity. The disordered stretch occupies residues 98–117 (APAAPAARTAAPSRPSWDNA). A domain III, AAA+ region region spans residues 128 to 344 (NVNPKHTFDN…GALNRVIANA (217 aa)). Gly-172, Gly-174, Lys-175, and Thr-176 together coordinate ATP. Positions 345 to 464 (NFTGRAITID…FSNLIRTLSS (120 aa)) are domain IV, binds dsDNA.

The protein belongs to the DnaA family. In terms of assembly, oligomerizes as a right-handed, spiral filament on DNA at oriC.

The protein localises to the cytoplasm. Functionally, plays an important role in the initiation and regulation of chromosomal replication. Binds to the origin of replication; it binds specifically double-stranded DNA at a 9 bp consensus (dnaA box): 5'-TTATC[CA]A[CA]A-3'. DnaA binds to ATP and to acidic phospholipids. DnaA can inhibit its own gene expression as well as that of other genes. In terms of biological role, plays an essential role in the initiation and regulation of chromosomal replication. ATP-DnaA binds to the origin of replication (oriC) to initiate formation of the DNA replication initiation complex once per cell cycle. Binds the DnaA box (a 9 base pair repeat at the origin) and separates the double-stranded (ds)DNA. Forms a right-handed helical filament on oriC DNA; dsDNA binds to the exterior of the filament while single-stranded (ss)DNA is stabiized in the filament's interior. The ATP-DnaA-oriC complex binds and stabilizes one strand of the AT-rich DNA unwinding element (DUE), permitting loading of DNA polymerase. After initiation quickly degrades to an ADP-DnaA complex that is not apt for DNA replication. Binds acidic phospholipids. The chain is Chromosomal replication initiator protein DnaA from Serratia marcescens.